A 117-amino-acid chain; its full sequence is Large ribosomal subunit protein bL20 (117 aa).

Belongs to the bacterial ribosomal protein bL20 family.

Its function is as follows. Binds directly to 23S ribosomal RNA and is necessary for the in vitro assembly process of the 50S ribosomal subunit. It is not involved in the protein synthesizing functions of that subunit. This is Large ribosomal subunit protein bL20 from Leptospira borgpetersenii serovar Hardjo-bovis (strain JB197).